We begin with the raw amino-acid sequence, 253 residues long: 3-deoxy-manno-octulosonate cytidylyltransferase (253 aa).

This sequence belongs to the KdsB family.

It localises to the cytoplasm. The enzyme catalyses 3-deoxy-alpha-D-manno-oct-2-ulosonate + CTP = CMP-3-deoxy-beta-D-manno-octulosonate + diphosphate. It participates in nucleotide-sugar biosynthesis; CMP-3-deoxy-D-manno-octulosonate biosynthesis; CMP-3-deoxy-D-manno-octulosonate from 3-deoxy-D-manno-octulosonate and CTP: step 1/1. Its pathway is bacterial outer membrane biogenesis; lipopolysaccharide biosynthesis. Activates KDO (a required 8-carbon sugar) for incorporation into bacterial lipopolysaccharide in Gram-negative bacteria. The chain is 3-deoxy-manno-octulosonate cytidylyltransferase from Pseudoalteromonas translucida (strain TAC 125).